The chain runs to 491 residues: MIIETNHACDLVIFGAKGDLTKRKLLPALYKLEKSKKIHKYTRIIASGRADWSTEDYIEKIKTEVKNFLNEEINDLIWKNLSSRIFFCNIDVHEPLHFFRLKTILKQKKNIIVYYCAVPSNTLNSIFIGLGNAHLNSVPSRIVLEKPLGVCLKTSKKINDQISKYFLESQIFRIDHYLGKESILNLFALRFSNTCLFYNWNNKTIDHIQITVSEEVGIEDRWNYFNMMGQMKDMVQNHLLQILTILTMDQPKNISSESIQHEKVKILRSLNPINIHNINKKTVRGQYCSGVINEKKVPSYLEENGANKNSLTETFVAIKVDLNNKQWSGVPFYLRTGKRLAHKYSEIVVFFKKKPTNLFKNLNSELLQNKLIIRLEPNPNIIFDFSVKAPGLEQEYKIENSQLKSSQFSKKYSKNSIDAYERLLFEIMRGVQSLFVCRDEIEAAWKWIDPIIHAWKNSKNNAPQLYMSGTWGPKNSDLLLAHDGRVWYEFH.

NADP(+) is bound by residues R49, 91–92 (DV), and K146. H176, K180, E214, and D233 together coordinate substrate. Residue H238 is the Proton acceptor of the active site. Residues K338 and K343 each coordinate substrate.

Belongs to the glucose-6-phosphate dehydrogenase family.

It carries out the reaction D-glucose 6-phosphate + NADP(+) = 6-phospho-D-glucono-1,5-lactone + NADPH + H(+). Its pathway is carbohydrate degradation; pentose phosphate pathway; D-ribulose 5-phosphate from D-glucose 6-phosphate (oxidative stage): step 1/3. Functionally, catalyzes the oxidation of glucose 6-phosphate to 6-phosphogluconolactone. The sequence is that of Glucose-6-phosphate 1-dehydrogenase from Buchnera aphidicola subsp. Acyrthosiphon pisum (strain APS) (Acyrthosiphon pisum symbiotic bacterium).